A 129-amino-acid polypeptide reads, in one-letter code: Histone H3-like centromeric protein A (129 aa).

Residues M1–P14 show a composition bias toward basic residues. A disordered region spans residues M1–K30. G2 carries the post-translational modification N,N,N-trimethylglycine. Phosphoserine occurs at positions 16, 22, and 57. Positions K30–G129 are H3-like. The CATD stretch occupies residues C64–A105.

The protein belongs to the histone H3 family. As to quaternary structure, component of centromeric nucleosomes, where DNA is wrapped around a histone octamer core. The octamer contains two molecules each of H2A, H2B, CENPA and H4 assembled in one CENPA-H4 heterotetramer and two H2A-H2B heterodimers. CENPA modulates the DNA-binding characteristics of nucleosomes so that protruding DNA ends have higher flexibility than in nucleosomes containing conventional histone H3. Inhibits binding of histone H1 to nucleosomes, since histone H1 binds preferentially to rigid DNA linkers that protrude from nucleosomes. Nucleosomes containing CENPA also contain histone H2A variants such as MACROH2A and H2A.Z/H2AZ1. The CENPA-H4 heterotetramer is more compact and structurally more rigid than corresponding H3-H4 heterotetramers. Can assemble into nucleosomes that contain both CENPA and histone H3.3; these nucleosomes interact with a single CENPC chain. Heterotrimer composed of HJURP, CENPA and histone H4, where HJURP interacts with the dimer formed by CENPA and histone H4 and prevents tetramerization of CENPA and H4. Component of the CENPA-NAC complex, at least composed of CENPA, CENPC, CENPH, CENPM, CENPN, CENPT and CENPU. Interacts (via CATD domain) with HJURP; the interaction is direct and is required for its localization to centromeres. Interacts with CENPC, CENPN and CENPT; interaction is direct. Part of a centromere complex consisting of CENPA, CENPT and CENPW. Identified in centromere complexes containing histones H2A, H2B and H4, and at least CENPA, CENPB, CENPC, CENPT, CENPN, HJURP, SUPT16H, SSRP1 and RSF1. Can self-associate. The CENPA-H4 heterotetramer can bind DNA by itself (in vitro). Interacts with CDK1, PPP1CA and RBBP7. Post-translationally, trimethylated by NTMT1 at the N-terminal glycine after cleavage of Met-1. Methylation is low before incorporation into nucleosomes and increases with cell cycle progression, with the highest levels in mitotic nucleosomes. Phosphorylated by CDK1 at Ser-57 during early mitosis; this abolishes association with chromatin and centromeres, prevents interaction with HJURP and thereby prevents premature assembly of CENPA into centromeres. Dephosphorylated at Ser-57 by PPP1CA during late mitosis. In terms of processing, poly-ADP-ribosylated by PARP1.

The protein localises to the nucleus. It localises to the chromosome. It is found in the centromere. In terms of biological role, histone H3-like nucleosomal protein that is specifically found in centromeric nucleosomes. Replaces conventional H3 in the nucleosome core of centromeric chromatin that serves as an assembly site for the inner kinetochore. The presence of CENPA subtly modifies the nucleosome structure and the way DNA is wrapped around the nucleosome and gives rise to protruding DNA ends that are less well-ordered and rigid compared to nucleosomes containing histone H3. May serve as an epigenetic mark that propagates centromere identity through replication and cell division. Required for recruitment and assembly of kinetochore proteins, and as a consequence required for progress through mitosis, chromosome segregation and cytokinesis. The protein is Histone H3-like centromeric protein A (CENPA) of Cricetulus griseus (Chinese hamster).